The chain runs to 213 residues: Large ribosomal subunit protein uL1 (213 aa).

The protein belongs to the universal ribosomal protein uL1 family. Part of the 50S ribosomal subunit.

In terms of biological role, binds directly to 23S rRNA. Probably involved in E site tRNA release. Its function is as follows. Protein L1 is also a translational repressor protein, it controls the translation of its operon by binding to its mRNA. This chain is Large ribosomal subunit protein uL1, found in Methanococcus voltae.